Consider the following 403-residue polypeptide: Ribosomal RNA large subunit methyltransferase I (403 aa).

The PUA domain maps to 9-88 (YPRLVLSKGR…ESIDIAFFTR (80 aa)).

This sequence belongs to the methyltransferase superfamily. RlmI family.

Its subcellular location is the cytoplasm. The enzyme catalyses cytidine(1962) in 23S rRNA + S-adenosyl-L-methionine = 5-methylcytidine(1962) in 23S rRNA + S-adenosyl-L-homocysteine + H(+). Specifically methylates the cytosine at position 1962 (m5C1962) of 23S rRNA. The protein is Ribosomal RNA large subunit methyltransferase I of Salmonella enteritidis PT4 (strain P125109).